Here is a 292-residue protein sequence, read N- to C-terminus: MAQPPPDVEGDDCLPEYHHLFCPDLLQDKVAFITGGGSGIGFRIAEIFMRHGCHTVIVGRSLQKVTTAAKKLVAATGKRCLPLSMDVRVPPEVMTAVDQALQEFGKINILINCAAGNFLCPASALSFNAFKTVVDIDTIGTFNVSSVLYKKFFRDHGGVIVNITATLSMRGQVLQLHAGAAKAAVDAMTRHLAVEWGPQNIRVNSLAPGAISGTEGLRRLRGSNASSKLKHFSNPIPRLGTKTEIAHSVLYLASPLASYVSGIVLVVDGGSWMTFPNGIKQLLEFESFSAKL.

Ala-2 is subject to N-acetylalanine. NADP(+) is bound by residues 35 to 40, 60 to 64, and Asp-86; these read GGGSGI and RSLQK. Arg-60 contributes to the substrate binding site. Residue Lys-64 is modified to N6-acetyllysine. Residues Arg-88, Phe-118, and 126–128 contribute to the substrate site; that span reads SFN. At Lys-151 the chain carries N6-acetyllysine. NADP(+) contacts are provided by residues Lys-182 and 208-214; that span reads PGAISGT. Residue Arg-219 participates in substrate binding. Phosphoserine is present on Ser-287. The short motif at 290 to 292 is the Microbody targeting signal element; it reads AKL. The residue at position 291 (Lys-291) is an N6-acetyllysine.

This sequence belongs to the short-chain dehydrogenases/reductases (SDR) family. 2,4-dienoyl-CoA reductase subfamily. Monomer, dimer and oligomer.

It is found in the peroxisome. It carries out the reaction a (2E,4Z)-dienoyl-CoA + NADPH + H(+) = a 4,5-saturated-(3E)-enoyl-CoA + NADP(+). The catalysed reaction is a (2E,4E)-dienoyl-CoA + NADPH + H(+) = a 4,5-saturated-(3E)-enoyl-CoA + NADP(+). The enzyme catalyses (2E,4E)-hexadienoyl-CoA + NADPH + H(+) = (3E)-hexenoyl-CoA + NADP(+). It catalyses the reaction (2E,4E)-decadienoyl-CoA + NADPH + H(+) = (3E)-decenoyl-CoA + NADP(+). It carries out the reaction (2E,4Z,7Z,10Z,13Z,16Z,19Z)-docosaheptaenoyl-CoA + NADPH + H(+) = (3E,7Z,10Z,13Z,16Z,19Z)-docosahexaenoyl-CoA + NADP(+). Functionally, auxiliary enzyme of beta-oxidation. Participates in the degradation of unsaturated fatty enoyl-CoA esters having double bonds in both even- and odd-numbered positions in peroxisome. Catalyzes the NADP-dependent reduction of 2,4-dienoyl-CoA to yield trans-3-enoyl-CoA. Has activity towards short and medium chain 2,4-dienoyl-CoAs, but also towards 2,4,7,10,13,16,19-docosaheptaenoyl-CoA, suggesting that it does not constitute a rate limiting step in the peroxisomal degradation of docosahexaenoic acid. In Mus musculus (Mouse), this protein is Peroxisomal 2,4-dienoyl-CoA reductase [(3E)-enoyl-CoA-producing] (Decr2).